Reading from the N-terminus, the 164-residue chain is Rhomboid-related protein 1 (164 aa).

The next 4 helical transmembrane spans lie at 10-30 (GFNALLQLMIGVPLEMVHGVL), 32-52 (ISLLYLAGVLAGSLTVSITDM), 56-76 (VVGGSGGVYALCSAHLANVVM), and 120-140 (PSFMAHLAGAVVGVSMGLTIL). Serine 60 functions as the Nucleophile in the catalytic mechanism. Histidine 125 is an active-site residue.

The protein belongs to the peptidase S54 family.

The protein resides in the membrane. The catalysed reaction is Cleaves type-1 transmembrane domains using a catalytic dyad composed of serine and histidine that are contributed by different transmembrane domains.. In terms of biological role, may be involved in regulated intramembrane proteolysis and the subsequent release of functional polypeptides from their membrane anchors. This Rattus norvegicus (Rat) protein is Rhomboid-related protein 1 (Rhbdl1).